A 320-amino-acid chain; its full sequence is Tyrosine recombinase Synpcc7942_B2651 (320 aa).

The 91-residue stretch at V16–R106 folds into the Core-binding (CB) domain. The Tyr recombinase domain occupies R127–E313. Catalysis depends on residues R167, K193, H264, R267, and H291. Catalysis depends on Y300, which acts as the O-(3'-phospho-DNA)-tyrosine intermediate.

It belongs to the 'phage' integrase family.

The protein localises to the cytoplasm. Its function is as follows. Site-specific tyrosine recombinase, which acts by catalyzing the cutting and rejoining of the recombining DNA molecules. The sequence is that of Tyrosine recombinase Synpcc7942_B2651 from Synechococcus elongatus (strain ATCC 33912 / PCC 7942 / FACHB-805) (Anacystis nidulans R2).